The sequence spans 326 residues: MNIWQSTSIITWLLAPFSLLFWLVSQIRLFLFRKKILKSYRSPVPVLVVGNISVGGNGKTPVVVWLVEQLQQRGVKVGVISRGYGGKSKDFPQLVTNQSSAEMVGDEPVLIVQRTGVPLAISANRQQSIELLLNQFKLDLIVTDDGLQHYALQRDIEWVVVDGIRRFGNGFVLPAGGLRELPSRLQTVQAIICNGGIAHQNEHLMTLEPEFAVNLRTGEQKPITDFIGQECVAIAGIGHPPRFFNMLENLGVKLLKTQGFADHQAFEPAQLKALAAEQIPLLMTEKDAVKCRTFAQQNWWYVPVSAKFSPESTACLLEPILKRLGK.

53 to 60 (SVGGNGKT) is a binding site for ATP.

It belongs to the LpxK family.

The enzyme catalyses a lipid A disaccharide + ATP = a lipid IVA + ADP + H(+). It participates in glycolipid biosynthesis; lipid IV(A) biosynthesis; lipid IV(A) from (3R)-3-hydroxytetradecanoyl-[acyl-carrier-protein] and UDP-N-acetyl-alpha-D-glucosamine: step 6/6. In terms of biological role, transfers the gamma-phosphate of ATP to the 4'-position of a tetraacyldisaccharide 1-phosphate intermediate (termed DS-1-P) to form tetraacyldisaccharide 1,4'-bis-phosphate (lipid IVA). This chain is Tetraacyldisaccharide 4'-kinase, found in Actinobacillus pleuropneumoniae serotype 7 (strain AP76).